We begin with the raw amino-acid sequence, 143 residues long: Class II hydrophobin qid3 (143 aa).

Positions 1-17 (MKFLTVAAVFFTAVLAA) are cleaved as a signal peptide. Pro residues predominate over residues 20–37 (NYPPPPPPTYAPPPPTYT). The tract at residues 20–67 (NYPPPPPPTYAPPPPTYTLPPNGNGGGNGNGNGNGNGGGNGNGNGNTN) is disordered. Tandem repeats lie at residues 41–42 (NG), 43–44 (NG), 47–48 (NG), 49–50 (NG), 51–52 (NG), 53–54 (NG), 55–56 (NG), 59–60 (NG), 61–62 (NG), and 63–64 (NG). A 10 X 2 AA repeats of N-G region spans residues 41-64 (NGNGGGNGNGNGNGNGGGNGNGNG). The segment covering 42 to 63 (GNGGGNGNGNGNGNGGGNGNGN) has biased composition (gly residues). 3 disulfides stabilise this stretch: Cys74/Cys124, Cys85/Cys97, and Cys125/Cys136.

Belongs to the cerato-ulmin hydrophobin family. As to quaternary structure, homotetramer. Further self-assembles to form highly ordered films at water-air interfaces through intermolecular interactions.

Its subcellular location is the secreted. It is found in the cell wall. Aerial growth, conidiation, and dispersal of filamentous fungi in the environment rely upon a capability of their secreting small amphipathic proteins called hydrophobins (HPBs) with low sequence identity. Class I can self-assemble into an outermost layer of rodlet bundles on aerial cell surfaces, conferring cellular hydrophobicity that supports fungal growth, development and dispersal; whereas Class II form highly ordered films at water-air interfaces through intermolecular interactions but contribute nothing to the rodlet structure. Qid3 is a class II hydrophobin that might acts as a chitinase inhibitor at the cell surface that blocks the degradation of the chitin rings localized in the budding region of dividing cells. In Trichoderma harzianum (Hypocrea lixii), this protein is Class II hydrophobin qid3.